We begin with the raw amino-acid sequence, 185 residues long: Ribosome-recycling factor (185 aa).

This sequence belongs to the RRF family.

Its subcellular location is the cytoplasm. Functionally, responsible for the release of ribosomes from messenger RNA at the termination of protein biosynthesis. May increase the efficiency of translation by recycling ribosomes from one round of translation to another. In Clostridium perfringens (strain ATCC 13124 / DSM 756 / JCM 1290 / NCIMB 6125 / NCTC 8237 / Type A), this protein is Ribosome-recycling factor.